Consider the following 605-residue polypeptide: Elongation factor 4 (605 aa).

The 184-residue stretch at 9–192 (SRIRNFCIIA…AIIARVPSPA (184 aa)) folds into the tr-type G domain. Residues 21-26 (DHGKST) and 139-142 (NKID) each bind GTP.

The protein belongs to the TRAFAC class translation factor GTPase superfamily. Classic translation factor GTPase family. LepA subfamily.

It is found in the cell inner membrane. The enzyme catalyses GTP + H2O = GDP + phosphate + H(+). Its function is as follows. Required for accurate and efficient protein synthesis under certain stress conditions. May act as a fidelity factor of the translation reaction, by catalyzing a one-codon backward translocation of tRNAs on improperly translocated ribosomes. Back-translocation proceeds from a post-translocation (POST) complex to a pre-translocation (PRE) complex, thus giving elongation factor G a second chance to translocate the tRNAs correctly. Binds to ribosomes in a GTP-dependent manner. This is Elongation factor 4 from Chlorobium phaeovibrioides (strain DSM 265 / 1930) (Prosthecochloris vibrioformis (strain DSM 265)).